The primary structure comprises 274 residues: Putative pyruvate, phosphate dikinase regulatory protein (274 aa).

151-158 (GVSRTSKT) contributes to the ADP binding site.

It belongs to the pyruvate, phosphate/water dikinase regulatory protein family. PDRP subfamily.

It carries out the reaction N(tele)-phospho-L-histidyl/L-threonyl-[pyruvate, phosphate dikinase] + ADP = N(tele)-phospho-L-histidyl/O-phospho-L-threonyl-[pyruvate, phosphate dikinase] + AMP + H(+). It catalyses the reaction N(tele)-phospho-L-histidyl/O-phospho-L-threonyl-[pyruvate, phosphate dikinase] + phosphate + H(+) = N(tele)-phospho-L-histidyl/L-threonyl-[pyruvate, phosphate dikinase] + diphosphate. In terms of biological role, bifunctional serine/threonine kinase and phosphorylase involved in the regulation of the pyruvate, phosphate dikinase (PPDK) by catalyzing its phosphorylation/dephosphorylation. The protein is Putative pyruvate, phosphate dikinase regulatory protein of Pelagibacter ubique (strain HTCC1062).